A 205-amino-acid polypeptide reads, in one-letter code: Golgi apparatus membrane protein TVP23 homolog B (205 aa).

At Met-1 the chain carries N-acetylmethionine. Residues 1 to 21 form a disordered region; that stretch reads MLQQDSNDDTEDVSLFDAEEE. The next 4 membrane-spanning stretches (helical) occupy residues 34–53, 54–72, 126–146, and 152–172; these read PVASFFHLFFRVSAIIVYLL, CGLLSSSFITCMVTIILLL, IFWLGLIACPVLWVIFAFSAL, and KWLAVVIMGVVLQGANLYGYI.

The protein belongs to the TVP23 family.

The protein resides in the membrane. This is Golgi apparatus membrane protein TVP23 homolog B (TVP23B) from Homo sapiens (Human).